Here is a 1051-residue protein sequence, read N- to C-terminus: Kinesin-like protein KIN-UC (1051 aa).

Composition is skewed to low complexity over residues 1–12 (MSSSNSSSAVRS), 28–39 (NSNHAVSLSSSS), and 64–90 (SASS…PVRR). Disordered stretches follow at residues 1 to 39 (MSSS…SSSS) and 51 to 109 (PGIA…RVSV). Positions 104–441 (RVRVSVRVRP…IMFGQRAMKI (338 aa)) constitute a Kinesin motor domain. 189–196 (GQTGTGKT) is an ATP binding site. A D-BOX motif is present at residues 411-419 (RTSLIITIG). Coiled coils occupy residues 452-534 (DYES…QKDQ) and 568-761 (DTSQ…KRYM). A compositionally biased stretch (basic and acidic residues) spans 753-766 (NVVEEKRYMKEDLS). Residues 753–788 (NVVEEKRYMKEDLSKGSAESGAQTGSQRSQGLKKSL) form a disordered region. Residues 772–788 (SGAQTGSQRSQGLKKSL) are compositionally biased toward polar residues. 3 ARM repeats span residues 792–831 (RATM…NLAA), 833–873 (EANQ…NLAM), and 875–915 (EKSQ…NLCG). An ARM 4; degenerate repeat occupies 917–956 (EKFLKLLKEEEGIKGLLTMAQSGNIDIIAQVARGMANFAK).

The protein belongs to the TRAFAC class myosin-kinesin ATPase superfamily. Kinesin family. Ungrouped subfamily. As to quaternary structure, interacts (via C-terminus) with NEK5. In terms of tissue distribution, expressed in young root hair-forming cells and in root hair-producing cells at the boundary between the hypocotyl and root. Expressed in cotyledons, young leaves, trichomes and flowers.

The protein localises to the cytoplasm. It localises to the cytoskeleton. Its subcellular location is the spindle. The protein resides in the phragmoplast. Acts as a plus-end microtubule-dependent motor protein. Involved in the control of root hair tip growth by promoting microtubule depolymerization and limiting the accumulation of endoplasmic microtubules. In vitro, binds to polymerized actin through ARM repeats, and to polymerized tubulin through N-terminal motor domain. This is Kinesin-like protein KIN-UC from Arabidopsis thaliana (Mouse-ear cress).